A 303-amino-acid chain; its full sequence is D-alanine--D-alanine ligase (303 aa).

The region spanning 104–300 is the ATP-grasp domain; it reads KLLWNAVGLP…FEKLVERVLE (197 aa). 132–187 serves as a coordination point for ATP; it reads IAKLSLPVFVKPSSEGSSVGVFKVKTKEELLPAITAALEFDTIVLVEEFLTGAEYS. Mg(2+) is bound by residues D254, E267, and N269.

This sequence belongs to the D-alanine--D-alanine ligase family. Requires Mg(2+) as cofactor. The cofactor is Mn(2+).

The protein resides in the cytoplasm. The catalysed reaction is 2 D-alanine + ATP = D-alanyl-D-alanine + ADP + phosphate + H(+). Its pathway is cell wall biogenesis; peptidoglycan biosynthesis. Cell wall formation. This is D-alanine--D-alanine ligase from Haemophilus ducreyi (strain 35000HP / ATCC 700724).